Here is an 89-residue protein sequence, read N- to C-terminus: Phosphocarrier protein HPr (89 aa).

One can recognise an HPr domain in the interval methionine 1–glutamine 89. Histidine 14 functions as the Pros-phosphohistidine intermediate in the catalytic mechanism. Serine 47 carries the phosphoserine; by HPrK/P modification.

The protein belongs to the HPr family.

The protein resides in the cytoplasm. Its activity is regulated as follows. Phosphorylation on Ser-47 inhibits the phosphoryl transfer from enzyme I to HPr. General (non sugar-specific) component of the phosphoenolpyruvate-dependent sugar phosphotransferase system (sugar PTS). This major carbohydrate active-transport system catalyzes the phosphorylation of incoming sugar substrates concomitantly with their translocation across the cell membrane. The phosphoryl group from phosphoenolpyruvate (PEP) is transferred to the phosphoryl carrier protein HPr by enzyme I. Phospho-HPr then transfers it to the PTS EIIA domain. Is involved in fructose transport. This is Phosphocarrier protein HPr (ptsH1) from Haloferax volcanii (strain ATCC 29605 / DSM 3757 / JCM 8879 / NBRC 14742 / NCIMB 2012 / VKM B-1768 / DS2) (Halobacterium volcanii).